A 157-amino-acid chain; its full sequence is Large ribosomal subunit protein uL22 (157 aa).

It belongs to the universal ribosomal protein uL22 family. As to quaternary structure, part of the 50S ribosomal subunit.

This protein binds specifically to 23S rRNA. It makes multiple contacts with different domains of the 23S rRNA in the assembled 50S subunit and ribosome. In terms of biological role, the globular domain of the protein is located near the polypeptide exit tunnel on the outside of the subunit, while an extended beta-hairpin is found that lines the wall of the exit tunnel in the center of the 70S ribosome. The sequence is that of Large ribosomal subunit protein uL22 from Staphylothermus marinus (strain ATCC 43588 / DSM 3639 / JCM 9404 / F1).